The sequence spans 300 residues: 33 kDa chaperonin (300 aa).

2 disulfides stabilise this stretch: cysteine 247/cysteine 249 and cysteine 280/cysteine 283.

Belongs to the HSP33 family. Post-translationally, under oxidizing conditions two disulfide bonds are formed involving the reactive cysteines. Under reducing conditions zinc is bound to the reactive cysteines and the protein is inactive.

It is found in the cytoplasm. Its function is as follows. Redox regulated molecular chaperone. Protects both thermally unfolding and oxidatively damaged proteins from irreversible aggregation. Plays an important role in the bacterial defense system toward oxidative stress. This is 33 kDa chaperonin from Prochlorococcus marinus (strain MIT 9312).